A 423-amino-acid chain; its full sequence is MNTTLRALSVALAAALIAPSAFAATAAIPTIDFHGYMRAGVGVSGDGSEAEWQKNKLGRLGNESDTYGELELGSEVYKKDDVSFYLDSMVSMVSDGSNDNETTLNDDAQFGLRQLNLQIKGLIPGDPNAVIWGGKRYYQRHDLHIIDTKYWNISGSGAGVENYTLGPGAVSLAWIRGDANDVDYRVDGDSNVNINYIDLRYAGWKPWAGSWTEFGIDYAMPNTTKKQDSYGGLYDADNGVMLTGEISQDMLGGYNKTVLQYANKGLAQNMVSQGGGWYDMWNYVNDATGYRVINTGLIPITEKFSINHVLTWGSADDITDYTDKTRMLSLVARGQYQFTDYVRLIGEVGGFYQKDSYNNGTSYKQAGEKYTIALGLADGPDFMSRPELRIFASYLNDSEDGKPFEDQTANNTWNFGVQVEAWW.

The signal sequence occupies residues 1 to 23 (MNTTLRALSVALAAALIAPSAFA).

Belongs to the porin LamB (TC 1.B.3) family. As to quaternary structure, homotrimer formed of three 18-stranded antiparallel beta-barrels, containing three independent channels.

It is found in the cell outer membrane. The enzyme catalyses beta-maltose(in) = beta-maltose(out). Involved in the transport of maltose and maltodextrins. This Klebsiella pneumoniae subsp. pneumoniae (strain ATCC 700721 / MGH 78578) protein is Maltoporin 1.